The primary structure comprises 128 residues: Holo-[acyl-carrier-protein] synthase (128 aa).

Mg(2+)-binding residues include Asp-8 and Glu-57.

Belongs to the P-Pant transferase superfamily. AcpS family. Requires Mg(2+) as cofactor.

It localises to the cytoplasm. The catalysed reaction is apo-[ACP] + CoA = holo-[ACP] + adenosine 3',5'-bisphosphate + H(+). In terms of biological role, transfers the 4'-phosphopantetheine moiety from coenzyme A to a Ser of acyl-carrier-protein. The protein is Holo-[acyl-carrier-protein] synthase of Syntrophus aciditrophicus (strain SB).